Consider the following 209-residue polypeptide: Large ribosomal subunit protein bL21m (209 aa).

Residues 1 to 43 constitute a mitochondrion transit peptide; that stretch reads MAAAIAASALPGAFGRLVSVCSRSILASQGSGSASLWSASRRF.

Belongs to the bacterial ribosomal protein bL21 family. As to quaternary structure, component of the mitochondrial ribosome large subunit (39S) which comprises a 16S rRNA and about 50 distinct proteins.

Its subcellular location is the mitochondrion. This Mus musculus (Mouse) protein is Large ribosomal subunit protein bL21m (Mrpl21).